The sequence spans 195 residues: HTH-type transcriptional regulator BetI (195 aa).

One can recognise an HTH tetR-type domain in the interval 8-68 (EIRRAQLIDA…ATMRHVLRDL (61 aa)). The H-T-H motif DNA-binding region spans 31 to 50 (TLASVAQRASISTGIVSHYF).

It participates in amine and polyamine biosynthesis; betaine biosynthesis via choline pathway [regulation]. Its function is as follows. Repressor involved in the biosynthesis of the osmoprotectant glycine betaine. It represses transcription of the choline transporter BetT and the genes of BetAB involved in the synthesis of glycine betaine. The chain is HTH-type transcriptional regulator BetI from Paraburkholderia phytofirmans (strain DSM 17436 / LMG 22146 / PsJN) (Burkholderia phytofirmans).